Here is a 309-residue protein sequence, read N- to C-terminus: Porphobilinogen deaminase (309 aa).

Cysteine 241 bears the S-(dipyrrolylmethanemethyl)cysteine mark.

Belongs to the HMBS family. Monomer. The cofactor is dipyrromethane.

It catalyses the reaction 4 porphobilinogen + H2O = hydroxymethylbilane + 4 NH4(+). It functions in the pathway porphyrin-containing compound metabolism; protoporphyrin-IX biosynthesis; coproporphyrinogen-III from 5-aminolevulinate: step 2/4. Functionally, tetrapolymerization of the monopyrrole PBG into the hydroxymethylbilane pre-uroporphyrinogen in several discrete steps. This Desulforamulus reducens (strain ATCC BAA-1160 / DSM 100696 / MI-1) (Desulfotomaculum reducens) protein is Porphobilinogen deaminase.